A 129-amino-acid polypeptide reads, in one-letter code: Phosphoribosyl-AMP cyclohydrolase (129 aa).

Mg(2+) is bound at residue D78. C79 provides a ligand contact to Zn(2+). Residues D80 and D82 each coordinate Mg(2+). Residues C96 and C103 each coordinate Zn(2+).

It belongs to the PRA-CH family. As to quaternary structure, homodimer. The cofactor is Mg(2+). Requires Zn(2+) as cofactor.

It is found in the cytoplasm. It carries out the reaction 1-(5-phospho-beta-D-ribosyl)-5'-AMP + H2O = 1-(5-phospho-beta-D-ribosyl)-5-[(5-phospho-beta-D-ribosylamino)methylideneamino]imidazole-4-carboxamide. It functions in the pathway amino-acid biosynthesis; L-histidine biosynthesis; L-histidine from 5-phospho-alpha-D-ribose 1-diphosphate: step 3/9. Its function is as follows. Catalyzes the hydrolysis of the adenine ring of phosphoribosyl-AMP. The polypeptide is Phosphoribosyl-AMP cyclohydrolase (Nitrosomonas eutropha (strain DSM 101675 / C91 / Nm57)).